Here is a 632-residue protein sequence, read N- to C-terminus: SH2B adapter protein 2 (632 aa).

Position 52 is a phosphotyrosine (Tyr52). Ser141 bears the Phosphoserine mark. In terms of domain architecture, PH spans 193-306; sequence DIQREGALRF…WVADIQGCVD (114 aa). Ser310 carries the phosphoserine modification. The segment at 381–409 is disordered; the sequence is TLESPGGSGSDSNNTGEQGAETDPEAEPE. Positions 400–409 are enriched in acidic residues; sequence AETDPEAEPE. The 99-residue stretch at 417-515 folds into the SH2 domain; it reads WFHGTLSRVK…SADITLRSYV (99 aa). 2 disordered regions span residues 516–537 and 558–632; these read RAQDPPPEPGPTPPAAPASPAC and ASPS…YSFY. The segment covering 519–532 has biased composition (pro residues); that stretch reads DPPPEPGPTPPAAP. Composition is skewed to low complexity over residues 558–579 and 604–626; these read ASPSDAAGASSSSASSSSAASG and EAVAATAAEEPPEAAPGRARAVE. Phosphotyrosine is present on Tyr629.

This sequence belongs to the SH2B adapter family. In terms of assembly, homodimer. Interacts with KIT/c-KIT, SHC1, EPOR, PDGFR, VAV1 and VAV3. Interacts (via N-terminal region) with SHC1. Interacts (via the phosphorylated C-terminus) with GRB2. Interacts (via its SH2 domain) with EPOR, INSR and KIT. Interacts with GRB2 after B-cell antigen receptor stimulation. Interacts (via PH domain) with VAV3. Interacts with NTRK1, NTRK2 and NTRK3 (phosphorylated); after stimulation of the receptor by its extracellular ligand and subsequent autophosphorylation of the receptor. Binds INSR, GRB2, ASB6 and CAP. Insulin stimulation leads to dissociation of CAP. Binds CBS only when SH2B2/APS has become phosphorylated. INSR binding does not depend on the phosphorylation of SH2B2/APS. Tyrosine phosphorylated by JAK2, KIT and other kinases activated by B-cell receptor in response to stimulation with cytokines, IL3, IL5, PDGF, IGF1, IGF2, CSF2/GM-CSF and cross-linking of the B-cell receptor complex. As to expression, expressed in spleen, prostate, testis, uterus, small intestine and skeletal muscle. Among hematopoietic cell lines, expressed exclusively in B-cells. Not expressed in most tumor cell lines.

Its subcellular location is the cytoplasm. It localises to the cell membrane. Adapter protein for several members of the tyrosine kinase receptor family. Involved in multiple signaling pathways. May be involved in coupling from immunoreceptor to Ras signaling. Acts as a negative regulator of cytokine signaling in collaboration with CBL. Binds to EPOR and suppresses EPO-induced STAT5 activation, possibly through a masking effect on STAT5 docking sites in EPOR. Suppresses PDGF-induced mitogenesis. May induce cytoskeletal reorganization via interaction with VAV3. The sequence is that of SH2B adapter protein 2 (SH2B2) from Homo sapiens (Human).